The sequence spans 290 residues: Protein MGF 110-9L (290 aa).

3 consecutive transmembrane segments (helical) span residues 1 to 19 (MKVI…VIQS), 128 to 148 (VENI…IGYI), and 163 to 183 (LLIF…IIMN). N-linked (GlcNAc...) asparagine; by host glycans are attached at residues Asn242 and Asn267.

Belongs to the asfivirus MGF 110 family.

Its subcellular location is the host membrane. Functionally, plays a role in virus cell tropism, and may be required for efficient virus replication in macrophages. This chain is Protein MGF 110-9L, found in Ornithodoros (relapsing fever ticks).